The sequence spans 798 residues: Pre-mRNA-splicing factor SYF1 (798 aa).

HAT repeat units follow at residues 5 to 37 (KFVK…TKRS), 39 to 71 (GDEL…WRIE), 83 to 115 (DEYN…WVIQ), 117 to 151 (KDLK…FIIN), 392 to 424 (VYAD…LFEE), 428 to 460 (KSEV…YRLK), 478 to 514 (DNHE…LLEV), 516 to 548 (GNYG…LNES), 550 to 584 (GHQA…VALK), 587 to 622 (ITKE…FELN), 661 to 695 (LDVN…LEES), and 697 to 731 (NEVA…FETM).

The protein belongs to the crooked-neck family. As to quaternary structure, associated with the spliceosome.

It is found in the nucleus. Functionally, involved in pre-mRNA splicing and cell cycle progression. The polypeptide is Pre-mRNA-splicing factor SYF1 (SYF1) (Kluyveromyces lactis (strain ATCC 8585 / CBS 2359 / DSM 70799 / NBRC 1267 / NRRL Y-1140 / WM37) (Yeast)).